Consider the following 260-residue polypeptide: Cytochrome c oxidase subunit 2 (260 aa).

Residues 1–43 are Mitochondrial intermembrane-facing; sequence MILRSLSCRFLTIALCDAAEPWQLGFQDAATPMMQGIIDLHHD. Residues 44–64 form a helical membrane-spanning segment; the sequence is IFFFLILILVFVLWMLVRALW. The Mitochondrial matrix portion of the chain corresponds to 65–84; it reads HFNEQTNPIPQRIVHGTTIE. The helical transmembrane segment at 85–105 threads the bilayer; sequence IIWTIFPSVILLFIAIPSFAL. Over 106-260 the chain is Mitochondrial intermembrane; sequence LYSMDGVLVD…VSNQLILQTN (155 aa). Positions 189, 224, 226, 228, 232, and 235 each coordinate Cu cation. Residue Glu-226 participates in Mg(2+) binding.

It belongs to the cytochrome c oxidase subunit 2 family. Component of the cytochrome c oxidase (complex IV, CIV), a multisubunit enzyme composed of a catalytic core of 3 subunits and several supernumerary subunits. The complex exists as a monomer or a dimer and forms supercomplexes (SCs) in the inner mitochondrial membrane with ubiquinol-cytochrome c oxidoreductase (cytochrome b-c1 complex, complex III, CIII). Cu cation is required as a cofactor.

It is found in the mitochondrion inner membrane. It carries out the reaction 4 Fe(II)-[cytochrome c] + O2 + 8 H(+)(in) = 4 Fe(III)-[cytochrome c] + 2 H2O + 4 H(+)(out). Functionally, component of the cytochrome c oxidase, the last enzyme in the mitochondrial electron transport chain which drives oxidative phosphorylation. The respiratory chain contains 3 multisubunit complexes succinate dehydrogenase (complex II, CII), ubiquinol-cytochrome c oxidoreductase (cytochrome b-c1 complex, complex III, CIII) and cytochrome c oxidase (complex IV, CIV), that cooperate to transfer electrons derived from NADH and succinate to molecular oxygen, creating an electrochemical gradient over the inner membrane that drives transmembrane transport and the ATP synthase. Cytochrome c oxidase is the component of the respiratory chain that catalyzes the reduction of oxygen to water. Electrons originating from reduced cytochrome c in the intermembrane space (IMS) are transferred via the dinuclear copper A center (CU(A)) of subunit 2 and heme A of subunit 1 to the active site in subunit 1, a binuclear center (BNC) formed by heme A3 and copper B (CU(B)). The BNC reduces molecular oxygen to 2 water molecules using 4 electrons from cytochrome c in the IMS and 4 protons from the mitochondrial matrix. The polypeptide is Cytochrome c oxidase subunit 2 (COX2) (Triticum aestivum (Wheat)).